Consider the following 335-residue polypeptide: UPF0353 protein MLBr01808 (335 aa).

Helical transmembrane passes span Trp18–Val38 and Val67–Thr87. A VWFA domain is found at Val98–Leu294. The helical transmembrane segment at Ala309–Ile329 threads the bilayer.

The protein belongs to the UPF0353 family.

Its subcellular location is the cell membrane. This chain is UPF0353 protein MLBr01808, found in Mycobacterium leprae (strain Br4923).